The following is a 250-amino-acid chain: Proteasome subunit alpha type-8 (250 aa).

It belongs to the peptidase T1A family. Component of the outer alpha-ring of the 20S proteasome core which is composed of 28 subunits that are arranged in four stacked rings, resulting in a barrel-shaped structure. The catalytic chamber with the active sites is on the inside of the barrel. Interacts with canonical subunits of the spermatoproteasome, including proteasome activators PSME4 (also called PA200) and PSME3 (also called PA28-gamma). Interacts with proteasome-interacting proteins chaperones including CCT6B and CCT2, ubiquitin ligases (TRIP12, NEDD4, TRIM36 and RAD18), and ubiquitin specific proteases such as USP9X, USP34, USP5 and USP47. Interacts with meiotic proteins cyclin dependent kinase CDK1 and the ATPase TRIP13 as well as proteins of the synaptonemal complex SIX6OS1 and SYCE3.

The protein localises to the nucleus. In terms of biological role, component of the spermatoproteasome, a proteasome specifically found in testis that promotes acetylation-dependent degradation of histones, thereby participating actively to the exchange of histones during spermatogenesis. The proteasome is a protein complex that degrades unneeded or damaged proteins by proteolysis, a chemical reaction that breaks peptide bonds. Required for 20S core proteasome assembly, essential for the degradation of meiotic proteins RAD51 and RPA1 at late prophase I and the progression of meiosis I during spermatogenesis. Localizes to the synaptonemal complex, a 'zipper'-like structure that holds homologous chromosome pairs in synapsis during meiotic prophase I. This is Proteasome subunit alpha type-8 from Mus musculus (Mouse).